Here is a 185-residue protein sequence, read N- to C-terminus: NADH-ubiquinone oxidoreductase chain 6 (185 aa).

5 helical membrane passes run 3 to 23, 28 to 48, 54 to 74, 87 to 107, and 134 to 154; these read SLFM…ISTP, SVFW…SLGL, IFII…IMLI, HFLP…TNSP, and ELVL…ILLA.

Belongs to the complex I subunit 6 family.

It is found in the mitochondrion membrane. The enzyme catalyses a ubiquinone + NADH + 5 H(+)(in) = a ubiquinol + NAD(+) + 4 H(+)(out). Core subunit of the mitochondrial membrane respiratory chain NADH dehydrogenase (Complex I) that is believed to belong to the minimal assembly required for catalysis. Complex I functions in the transfer of electrons from NADH to the respiratory chain. The immediate electron acceptor for the enzyme is believed to be ubiquinone. The chain is NADH-ubiquinone oxidoreductase chain 6 (ND6) from Sarcophyton glaucum (Toadstool umbrella leather coral).